We begin with the raw amino-acid sequence, 118 residues long: NADPH-dependent 7-cyano-7-deazaguanine reductase (118 aa).

Residue C31 is the Thioimide intermediate of the active site. Residue D38 is the Proton donor of the active site. Substrate contacts are provided by residues 53–55 (VEL) and 72–73 (YE).

It belongs to the GTP cyclohydrolase I family. QueF type 1 subfamily.

The protein localises to the cytoplasm. It carries out the reaction 7-aminomethyl-7-carbaguanine + 2 NADP(+) = 7-cyano-7-deazaguanine + 2 NADPH + 3 H(+). Its pathway is tRNA modification; tRNA-queuosine biosynthesis. Catalyzes the NADPH-dependent reduction of 7-cyano-7-deazaguanine (preQ0) to 7-aminomethyl-7-deazaguanine (preQ1). This Chlorobium phaeobacteroides (strain BS1) protein is NADPH-dependent 7-cyano-7-deazaguanine reductase.